The following is a 22-amino-acid chain: Unknown protein 20 from 2D-PAGE (22 aa).

This is Unknown protein 20 from 2D-PAGE from Bombyx mori (Silk moth).